Here is a 100-residue protein sequence, read N- to C-terminus: MTVSNTVDQYTVLSGDRSKIKDLLCNRLTECGWRDEVRLLCRTILLEKGTGNSFTVEQLITEVTPKARTLVPDAVKKELLMKIRTILTENESEIEDAEEP.

This sequence belongs to the ENY2 family. Component of the nuclear pore complex (NPC)-associated AMEX complex (anchoring and mRNA export complex), composed of at least e(y)2 and xmas-2. Component of the SAGA transcription coactivator-HAT complexes, at least composed of Ada2b, e(y)2, Pcaf/Gcn5, Taf10 and Nipped-A/Trrap. Within the SAGA complex, e(y)2, Sgf11, and not/nonstop form an additional subcomplex of SAGA called the DUB module (deubiquitination module). Component of the THO complex, composed of at least e(y)2, HPR1, THO2, THOC5, THOC6 and THOC7. Interacts with e(y)1. Interacts with su(Hw) (via zinc fingers). Interacts with xmas-2; required for localization to the nuclear periphery. Interacts with the nuclear pore complex (NPC).

It is found in the nucleus. The protein localises to the nucleoplasm. The protein resides in the cytoplasm. In terms of biological role, involved in mRNA export coupled transcription activation by association with both the AMEX and the SAGA complexes. The SAGA complex is a multiprotein complex that activates transcription by remodeling chromatin and mediating histone acetylation and deubiquitination. Within the SAGA complex, participates in a subcomplex that specifically deubiquitinates histone H2B. The SAGA complex is recruited to specific gene promoters by activators, where it is required for transcription. Required for nuclear receptor-mediated transactivation. Involved in transcription elongation by recruiting the THO complex onto nascent mRNA. The AMEX complex functions in docking export-competent ribonucleoprotein particles (mRNPs) to the nuclear entrance of the nuclear pore complex (nuclear basket). AMEX participates in mRNA export and accurate chromatin positioning in the nucleus by tethering genes to the nuclear periphery. The protein is Enhancer of yellow 2 transcription factor of Drosophila ananassae (Fruit fly).